Here is a 140-residue protein sequence, read N- to C-terminus: Protein SNA4 (140 aa).

Over 1 to 8 the chain is Cytoplasmic; the sequence is MCCYCVCC. S-palmitoyl cysteine attachment occurs at residues Cys2, Cys3, Cys5, Cys7, and Cys8. A helical transmembrane segment spans residues 9–29; it reads TVSDFILYIVAFFFPPAAVLL. Topologically, residues 30–41 are vacuolar; it reads RSGPCSSDFLLN. The chain crosses the membrane as a helical span at residues 42–62; the sequence is VLLTLLGFLPGMLHAFYYITI. Topologically, residues 63 to 140 are cytoplasmic; that stretch reads TSPLRNAEYV…LVESPPPYVP (78 aa). The interval 84–140 is disordered; it reads RNVPSNRPQNSQTPQNRPQQGSSARNVYPSVETPLLQGAAPHDNKQSLVESPPPYVP. Positions 85–108 are enriched in polar residues; that stretch reads NVPSNRPQNSQTPQNRPQQGSSAR. Residue Lys128 forms a Glycyl lysine isopeptide (Lys-Gly) (interchain with G-Cter in ubiquitin) linkage. The residue at position 134 (Ser134) is a Phosphoserine.

The protein belongs to the UPF0057 (PMP3) family.

Its subcellular location is the vacuole membrane. This is Protein SNA4 (SNA4) from Saccharomyces cerevisiae (strain ATCC 204508 / S288c) (Baker's yeast).